Consider the following 656-residue polypeptide: MAFTLRRAFCHMSVFWMPGAVVALKIHPANNVQKAVRDCLRVWFCSLQPDLFRVRFYHAYCKSFHSENGNDLHPVGEPWFSQAQVWNQPEQTLKNEDEEMLSRRLNSFASFEEVLSFIHTLDTLPVTLASAALLRICEIGKRDDEQRLPKEVLENRVFQALCLRCERDPSHLTNAVLVTVLQSLVIDPQSSLVLSLVAECQRRLRRGSLEVHHLCVLGESLARLQGASCEILKLVICQLQSENLETFAPEDIVSVYRILQACPEEVDKHQTFLNTVNNFSLSIVSYLSPKSISHVLTALVALDQTHARPLLIKLGKSVVRYIPRFTNEELRQVLEAFVYFGHSDRFFTEALEQHVAAQCFSLDPAVASSVMEYCSRKRILSKPIFDVVAEIFVCQSEKFSPSQISELIEPFGKLNYLPPNAPALFRKVENVLFAHLRHFPPKMLLRLLHSCSLIERHPVNFMSKIFSPFFLQRLQGKESYLDRLSLAQMTQLFLTSVLECPFYKGPKLLPKYQVKSFLTPCCSLETPMDLHLYKSVVIGLIDLLGSRLYFASKVLTPYYYTIDVEIKLDEDGFVLPFTVDEDVHTRVALCIDGPQRFCLGSKHLLGKEAIKQRHLRLLGYQVVQVPYHELELLTSRLELVDYLQRKLFSQSSTVHW.

The RAP domain maps to Val-587–Arg-645.

The protein belongs to the FAST kinase family.

Its subcellular location is the mitochondrion. Functionally, required for normal mitochondrial respiration. Increases steady-state levels and half-lives of a subset of mature mitochondrial mRNAs MT-ND2, MT-ND3, MT-CYTB, MT-CO2, and MT-ATP8/6. Promotes MT-CO1 mRNA translation and increases mitochondrial complex IV assembly and activity. The chain is FAST kinase domain-containing protein 3, mitochondrial (Fastkd3) from Rattus norvegicus (Rat).